Consider the following 452-residue polypeptide: UDP-N-acetylmuramoyl-L-alanine--L-glutamate ligase (452 aa).

Position 118–124 (118–124 (GSKGKST)) interacts with ATP.

Belongs to the MurCDEF family. MurD2 subfamily.

Its subcellular location is the cytoplasm. It catalyses the reaction UDP-N-acetyl-alpha-D-muramoyl-L-alanine + L-glutamate + ATP = UDP-N-acetyl-alpha-D-muramoyl-L-alanyl-L-glutamate + ADP + phosphate + H(+). It participates in cell wall biogenesis; peptidoglycan biosynthesis. Its function is as follows. Cell wall formation. Catalyzes the addition of L-glutamate to the nucleotide precursor UDP-N-acetylmuramoyl-L-alanine. This chain is UDP-N-acetylmuramoyl-L-alanine--L-glutamate ligase, found in Micromonospora sp. (strain ATCC 39149 / NRRL 15099 / SCC 1413).